The following is a 122-amino-acid chain: Ribosome-binding factor A (122 aa).

The protein belongs to the RbfA family. Monomer. Binds 30S ribosomal subunits, but not 50S ribosomal subunits or 70S ribosomes.

It localises to the cytoplasm. One of several proteins that assist in the late maturation steps of the functional core of the 30S ribosomal subunit. Associates with free 30S ribosomal subunits (but not with 30S subunits that are part of 70S ribosomes or polysomes). Required for efficient processing of 16S rRNA. May interact with the 5'-terminal helix region of 16S rRNA. The polypeptide is Ribosome-binding factor A (Albidiferax ferrireducens (strain ATCC BAA-621 / DSM 15236 / T118) (Rhodoferax ferrireducens)).